A 389-amino-acid chain; its full sequence is NAD-dependent protein deacetylase sirtuin-2 (389 aa).

The tract at residues 1–34 (MAEPDPSHPLETQAGKVQEAQDSDSDSEGGAAGG) is disordered. Residue Ala-2 is modified to N-acetylalanine. 4 positions are modified to phosphoserine: Ser-23, Ser-25, Ser-27, and Ser-53. The 282-residue stretch at 57–338 (RLLDELTLEG…LALAELLGWK (282 aa)) folds into the Deacetylase sirtuin-type domain. Residues 85–89 (AGIST) and 95–97 (DFR) each bind NAD(+). Phosphoserine is present on Ser-100. Position 167 to 170 (167 to 170 (QNID)) interacts with NAD(+). His-187 (proton acceptor) is an active-site residue. Positions 195 and 200 each coordinate Zn(2+). Position 207 is a phosphoserine (Ser-207). Residues Cys-221 and Cys-224 each contribute to the Zn(2+) site. NAD(+) is bound by residues 262–263 (TS), 286–288 (NKE), and Cys-324. A disordered region spans residues 350–389 (ASIDAQSGAEAPNPSTSASPRKSPPPAQDEARTTEREKPQ). Residues Ser-368 and Ser-372 each carry the phosphoserine modification. The segment covering 378 to 389 (DEARTTEREKPQ) has biased composition (basic and acidic residues).

Belongs to the sirtuin family. Class I subfamily. Interacts with CDC20, FOXO3 and FZR1. Associates with microtubules in primary cortical mature neurons. Homotrimer. Interacts (via both phosphorylated, unphosphorylated, active or inactive forms) with HDAC6; the interaction is necessary for the complex to interact with alpha-tubulin, suggesting that these proteins belong to a large complex that deacetylates the cytoskeleton. Interacts with FOXO1; the interaction is disrupted upon serum-starvation or oxidative stress, leading to increased level of acetylated FOXO1 and induction of autophagy. Interacts with RELA; the interaction occurs in the cytoplasm and is increased in a TNF-alpha-dependent manner. Interacts with HOXA10; the interaction is direct. Interacts with YWHAB and YWHAG; the interactions occur in a AKT-dependent manner and increase SIRT2-dependent TP53 deacetylation. Interacts with MAPK1/ERK2 and MAPK3/ERK1; the interactions increase SIRT2 stability and deacetylation activity. Interacts (phosphorylated form) with KMT5A isoform 2; the interaction is direct, stimulates KMT5A-mediated methyltransferase activity on histone at 'Lys-20' (H4K20me1) and is increased in a H(2)O(2)-induced oxidative stress-dependent manner. Interacts with G6PD; the interaction is enhanced by H(2)O(2) treatment. Interacts with a G1/S-specific cyclin E-CDK2 complex. Interacts with AURKA, CDK5R1 (p35 form) and CDK5 and HIF1A. Interacts with the tRNA ligase SARS1; recruited to the VEGFA promoter via interaction with SARS1. Interacts with BEX4; negatively regulates alpha-tubulin deacetylation by SIRT2. Zn(2+) is required as a cofactor. Post-translationally, phosphorylated at phosphoserine and phosphothreonine. Phosphorylated at Ser-368 by a mitotic kinase CDK1/cyclin B at the G2/M transition; phosphorylation regulates the delay in cell-cycle progression. Phosphorylated at Ser-368 by a mitotic kinase G1/S-specific cyclin E/Cdk2 complex; phosphorylation inactivates SIRT2-mediated alpha-tubulin deacetylation and thereby negatively regulates cell adhesion, cell migration and neurite outgrowth during neuronal differentiation. Phosphorylated by cyclin A/Cdk2 and p35-Cdk5 complexes and to a lesser extent by the cyclin D3/Cdk4 and cyclin B/Cdk1, in vitro. Dephosphorylated at Ser-368 by CDC14A and CDC14B around early anaphase. Acetylated by EP300; acetylation leads both to the decreased of SIRT2-mediated alpha-tubulin deacetylase activity and SIRT2-mediated down-regulation of TP53 transcriptional activity. In terms of processing, ubiquitinated.

Its subcellular location is the nucleus. It localises to the cytoplasm. The protein resides in the perinuclear region. It is found in the cytoskeleton. The protein localises to the microtubule organizing center. Its subcellular location is the centrosome. It localises to the centriole. The protein resides in the spindle. It is found in the midbody. The protein localises to the chromosome. Its subcellular location is the perikaryon. It localises to the cell projection. The protein resides in the growth cone. It is found in the myelin membrane. The enzyme catalyses N(6)-acetyl-L-lysyl-[protein] + NAD(+) + H2O = 2''-O-acetyl-ADP-D-ribose + nicotinamide + L-lysyl-[protein]. The catalysed reaction is N(6)-tetradecanoyl-L-lysyl-[protein] + NAD(+) + H2O = 2''-O-tetradecanoyl-ADP-D-ribose + nicotinamide + L-lysyl-[protein]. It catalyses the reaction N(6)-hexadecanoyl-L-lysyl-[protein] + NAD(+) + H2O = 2''-O-hexadecanoyl-ADP-D-ribose + nicotinamide + L-lysyl-[protein]. Its activity is regulated as follows. Inhibited by Sirtinol, A3 and M15 small molecules. Inhibited by nicotinamide. Functionally, NAD-dependent protein deacetylase, which deacetylates internal lysines on histone and alpha-tubulin as well as many other proteins such as key transcription factors. Participates in the modulation of multiple and diverse biological processes such as cell cycle control, genomic integrity, microtubule dynamics, cell differentiation, metabolic networks, and autophagy. Plays a major role in the control of cell cycle progression and genomic stability. Functions in the antephase checkpoint preventing precocious mitotic entry in response to microtubule stress agents, and hence allowing proper inheritance of chromosomes. Positively regulates the anaphase promoting complex/cyclosome (APC/C) ubiquitin ligase complex activity by deacetylating CDC20 and FZR1, then allowing progression through mitosis. Associates both with chromatin at transcriptional start sites (TSSs) and enhancers of active genes. Plays a role in cell cycle and chromatin compaction through epigenetic modulation of the regulation of histone H4 'Lys-20' methylation (H4K20me1) during early mitosis. Specifically deacetylates histone H4 at 'Lys-16' (H4K16ac) between the G2/M transition and metaphase enabling H4K20me1 deposition by KMT5A leading to ulterior levels of H4K20me2 and H4K20me3 deposition throughout cell cycle, and mitotic S-phase progression. Deacetylates KMT5A modulating KMT5A chromatin localization during the mitotic stress response. Also deacetylates histone H3 at 'Lys-57' (H3K56ac) during the mitotic G2/M transition. During oocyte meiosis progression, may deacetylate histone H4 at 'Lys-16' (H4K16ac) and alpha-tubulin, regulating spindle assembly and chromosome alignment by influencing microtubule dynamics and kinetochore function. Deacetylates histone H4 at 'Lys-16' (H4K16ac) at the VEGFA promoter and thereby contributes to regulate expression of VEGFA, a key regulator of angiogenesis. Deacetylates alpha-tubulin at 'Lys-40' and hence controls neuronal motility, oligodendroglial cell arbor projection processes and proliferation of non-neuronal cells. Phosphorylation at Ser-368 by a G1/S-specific cyclin E-CDK2 complex inactivates SIRT2-mediated alpha-tubulin deacetylation, negatively regulating cell adhesion, cell migration and neurite outgrowth during neuronal differentiation. Deacetylates PARD3 and participates in the regulation of Schwann cell peripheral myelination formation during early postnatal development and during postinjury remyelination. Involved in several cellular metabolic pathways. Plays a role in the regulation of blood glucose homeostasis by deacetylating and stabilizing phosphoenolpyruvate carboxykinase PCK1 activity in response to low nutrient availability. Acts as a key regulator in the pentose phosphate pathway (PPP) by deacetylating and activating the glucose-6-phosphate G6PD enzyme, and therefore, stimulates the production of cytosolic NADPH to counteract oxidative damage. Maintains energy homeostasis in response to nutrient deprivation as well as energy expenditure by inhibiting adipogenesis and promoting lipolysis. Attenuates adipocyte differentiation by deacetylating and promoting FOXO1 interaction to PPARG and subsequent repression of PPARG-dependent transcriptional activity. Plays a role in the regulation of lysosome-mediated degradation of protein aggregates by autophagy in neuronal cells. Deacetylates FOXO1 in response to oxidative stress or serum deprivation, thereby negatively regulating FOXO1-mediated autophagy. Deacetylates a broad range of transcription factors and co-regulators regulating target gene expression. Deacetylates transcriptional factor FOXO3 stimulating the ubiquitin ligase SCF(SKP2)-mediated FOXO3 ubiquitination and degradation. Deacetylates HIF1A and therefore promotes HIF1A degradation and inhibition of HIF1A transcriptional activity in tumor cells in response to hypoxia. Deacetylates RELA in the cytoplasm inhibiting NF-kappaB-dependent transcription activation upon TNF-alpha stimulation. Inhibits transcriptional activation by deacetylating p53/TP53 and EP300. Also deacetylates EIF5A. Functions as a negative regulator on oxidative stress-tolerance in response to anoxia-reoxygenation conditions. Plays a role as tumor suppressor. In addition to protein deacetylase activity, also has activity toward long-chain fatty acyl groups and mediates protein-lysine demyristoylation and depalmitoylation of target proteins, such as ARF6 and KRAS, thereby regulating their association with membranes. This chain is NAD-dependent protein deacetylase sirtuin-2 (SIRT2), found in Macaca fascicularis (Crab-eating macaque).